The primary structure comprises 105 residues: Chloroacetanilide N-alkylformylase 1, ferredoxin component (105 aa).

The 104-residue stretch at 2–105 folds into the 2Fe-2S ferredoxin-type domain; the sequence is PTIIVTTRDG…GLRVAIAPED (104 aa). The [2Fe-2S] cluster site is built by C40, C46, C49, and C86.

This sequence belongs to the adrenodoxin/putidaredoxin family. The chloroacetanilide N-alkylformylase multicomponent enzyme system is composed of an oxygenase component (CndA) and an electron transfer component formed by a ferredoxin reductase (CndC1) and a ferredoxin (CndB1). In vitro, chloroacetanilide N-alkylformylase assays in which CndB1 is substituted for CndB2 demonstrate that the two enzymes possess nearly identical activities. Requires [2Fe-2S] cluster as cofactor.

Component of the chloroacetanilide N-alkylformylase multicomponent enzyme system involved in the degradation of chloroacetanilide herbicides (N-alkoxyalkyl-N-chloroacetyl-substituted aniline derivatives). In vitro, functions as an intermediate electron transfer protein. The sequence is that of Chloroacetanilide N-alkylformylase 1, ferredoxin component from Rhizorhabdus wittichii (strain DC-6 / KACC 16600) (Sphingomonas wittichii).